A 587-amino-acid chain; its full sequence is Thiol:disulfide interchange protein DsbD 2 (587 aa).

The signal sequence occupies residues 1-18 (MRVLILLLMLLLPGLSQA). Over 19-172 (QPGDDLFAPR…SLQAGNLAWS (154 aa)) the chain is Periplasmic. 2 disulfide bridges follow: Cys-124-Cys-130 and Cys-188-Cys-308. Residues 173–193 (LLLFFGLGLLLAFAPCSLPML) form a helical membrane-spanning segment. Residues 194 to 216 (PILAGLVVGSGAGPRRGLLLAGS) are Cytoplasmic-facing. Residues 217 to 237 (YVLSMALVYAGLGVVAALLGG) form a helical membrane-spanning segment. Topologically, residues 238-246 (NLQAWLQQP) are periplasmic. A helical membrane pass occupies residues 247-267 (WLLGSFAALFVFLALPMFGFF). The Cytoplasmic segment spans residues 268 to 299 (ELQLPAALRDRLDGLSRGRKGGSLAGAAALGA). A helical membrane pass occupies residues 300–320 (LSGLLVGPCMTAPLAGALLYI). Residues 321–330 (AQTGNALHGG) lie on the Periplasmic side of the membrane. The helical transmembrane segment at 331–351 (LVLFSLGLGIGMPLLLLVTVG) threads the bilayer. Residues 352 to 360 (SRFLPKPGP) lie on the Cytoplasmic side of the membrane. Residues 361 to 381 (WMNLVKGVFGFLFLGTAWILL) form a helical membrane-spanning segment. At 382-383 (RP) the chain is on the periplasmic side. A helical transmembrane segment spans residues 384 to 404 (LLGEALWIGLGGALLLVLAYA). Topologically, residues 405 to 416 (ALHTARGLARHA) are cytoplasmic. The chain crosses the membrane as a helical span at residues 417–437 (VLFGAAGCIFGLWGAAMLLGA). Residues 438–587 (AAGADDPWRP…AHWQATRERG (150 aa)) are Periplasmic-facing. One can recognise a Thioredoxin domain in the interval 448-585 (LQVYAAANRG…FLAHWQATRE (138 aa)). A disulfide bridge links Cys-500 with Cys-503.

This sequence belongs to the thioredoxin family. DsbD subfamily.

It localises to the cell inner membrane. It catalyses the reaction [protein]-dithiol + NAD(+) = [protein]-disulfide + NADH + H(+). The catalysed reaction is [protein]-dithiol + NADP(+) = [protein]-disulfide + NADPH + H(+). Required to facilitate the formation of correct disulfide bonds in some periplasmic proteins and for the assembly of the periplasmic c-type cytochromes. Acts by transferring electrons from cytoplasmic thioredoxin to the periplasm. This transfer involves a cascade of disulfide bond formation and reduction steps. In Pseudomonas aeruginosa (strain ATCC 15692 / DSM 22644 / CIP 104116 / JCM 14847 / LMG 12228 / 1C / PRS 101 / PAO1), this protein is Thiol:disulfide interchange protein DsbD 2.